Reading from the N-terminus, the 309-residue chain is Probable cell division protein WhiA (309 aa).

A DNA-binding region (H-T-H motif) is located at residues 275 to 309; that stretch reads SLKELGELVPGGPISKSGINHRLRKINQYAEKLRA.

The protein belongs to the WhiA family.

Functionally, involved in cell division and chromosome segregation. The protein is Probable cell division protein WhiA of Pediococcus pentosaceus (strain ATCC 25745 / CCUG 21536 / LMG 10740 / 183-1w).